A 141-amino-acid polypeptide reads, in one-letter code: Putative nickel-responsive regulator (141 aa).

Residues His80, His91, His93, and Cys99 each coordinate Ni(2+).

It belongs to the transcriptional regulatory CopG/NikR family. Ni(2+) is required as a cofactor.

In terms of biological role, transcriptional regulator. The protein is Putative nickel-responsive regulator of Methanococcus aeolicus (strain ATCC BAA-1280 / DSM 17508 / OCM 812 / Nankai-3).